A 233-amino-acid polypeptide reads, in one-letter code: 1-(5-phosphoribosyl)-5-[(5-phosphoribosylamino)methylideneamino] imidazole-4-carboxamide isomerase (233 aa).

Asp-8 (proton acceptor) is an active-site residue. Asp-125 functions as the Proton donor in the catalytic mechanism.

The protein belongs to the HisA/HisF family.

The protein resides in the cytoplasm. The catalysed reaction is 1-(5-phospho-beta-D-ribosyl)-5-[(5-phospho-beta-D-ribosylamino)methylideneamino]imidazole-4-carboxamide = 5-[(5-phospho-1-deoxy-D-ribulos-1-ylimino)methylamino]-1-(5-phospho-beta-D-ribosyl)imidazole-4-carboxamide. The protein operates within amino-acid biosynthesis; L-histidine biosynthesis; L-histidine from 5-phospho-alpha-D-ribose 1-diphosphate: step 4/9. This Thermococcus kodakarensis (strain ATCC BAA-918 / JCM 12380 / KOD1) (Pyrococcus kodakaraensis (strain KOD1)) protein is 1-(5-phosphoribosyl)-5-[(5-phosphoribosylamino)methylideneamino] imidazole-4-carboxamide isomerase.